The sequence spans 417 residues: Equilibrative nucleotide transporter 2 (417 aa).

The next 11 membrane-spanning stretches (helical) occupy residues 20–40, 52–72, 85–105, 109–129, 144–164, 185–205, 265–285, 292–312, 328–348, 354–374, and 393–413; these read AVCWLLGVGCLLAWNSMLTIV, PSRILTIIYQSFSIGALSVLV, LFGYSLFSLGSLAVLVLNLAT, GGIGSFIGVCVISAAFGLADA, PEFLQSFLAGLAASGALTSGL, LFFAMSASFELVCVLLYAYVF, LAVTLFLVYLLTFSIFPGFLS, SLGDWYALVLIAVFNVSDLVG, CLLITSLGRLLLIPAFNITGI, WMIFLMSVLGLSNGYLTVCVI, and LVLYICGGMFAGVACDWLWLV.

This sequence belongs to the SLC29A/ENT transporter (TC 2.A.57) family. In terms of tissue distribution, expressed in leaves and flowers.

The protein resides in the cell membrane. Functionally, may be involved in nucleoside transport. The protein is Equilibrative nucleotide transporter 2 (ENT2) of Arabidopsis thaliana (Mouse-ear cress).